A 1205-amino-acid chain; its full sequence is Centrosome and spindle pole associated protein 1 (1205 aa).

Coiled-coil stretches lie at residues 12 to 34 and 87 to 108; these read QKAKLAKDKAELESDPPYMEMKG and KLKEELRQDYRRYLTQGITQAK. The disordered stretch occupies residues 16 to 37; that stretch reads LAKDKAELESDPPYMEMKGKAS. The segment covering 158 to 173 has biased composition (basic and acidic residues); sequence STEKVRQVEKNIEPKS. 3 disordered regions span residues 158–187, 222–277, and 380–467; these read STEKVRQVEKNIEPKSQRNKNPISQGKSDL, SRRP…PGVS, and QQKK…GSTL. Positions 176–187 are enriched in polar residues; the sequence is NKNPISQGKSDL. Basic and acidic residues-rich tracts occupy residues 222 to 233 and 257 to 275; these read SRRPLKQTKEEV and ANGERVLDRQHCRADRDPG. Residues 357 to 391 adopt a coiled-coil conformation; sequence EDRELTKRRKEKYRQELLEQIAEQQKKKRREKDLA. Basic and acidic residues-rich tracts occupy residues 401 to 410 and 417 to 428; these read DPEKSPDRLK and RHFEEMPPERPR. Ser-405 bears the Phosphoserine mark. A compositionally biased stretch (pro residues) spans 433 to 447; the sequence is TPPPPFSAPSSPSVP. Positions 574–618 form a coiled coil; sequence STQSLQSYQEALQEQIREREARRKKERLEKEEYEAKLEAEMRIYN. The disordered stretch occupies residues 677–704; sequence AENLEDSANKNSGPLQTQSSPFARGNTF. The span at 685 to 697 shows a compositional bias: polar residues; the sequence is NKNSGPLQTQSSP. Positions 724–813 form a coiled coil; sequence RFQIEEKRQR…EKHNLQLQHY (90 aa). A phosphoserine mark is found at Ser-850 and Ser-869. Positions 862 to 881 are disordered; it reads SSMSRAQSPPVPARKNQLRA. Residues 874–911 adopt a coiled-coil conformation; it reads ARKNQLRAEEEKKNVIMELSEMRKQLRSEERRLQGRLL. The residue at position 915 (Ser-915) is a Phosphoserine. Positions 993–1014 form a coiled coil; sequence QQQALLREQQKRLNRIKMRRDA. 3 disordered regions span residues 1086-1105, 1124-1169, and 1182-1205; these read GLDFDSSRLHTPQDGLSLKS, RLTE…RPGT, and NEEQHKGPGKPGTFTWQGLSAAHA. Residues 1124–1134 show a composition bias toward basic and acidic residues; that stretch reads RLTEQQKKPTN. Positions 1135 to 1145 are enriched in acidic residues; it reads TDDEGSLVDPD. A compositionally biased stretch (basic and acidic residues) spans 1146-1156; sequence DIMRHLSDDGR.

As to quaternary structure, interacts with PLEKHG6. Interacts with ARMC9, TOGARAM1, CCDC66, CEP104 and CEP290. Phosphorylated. Phosphorylation increases in colcemide-treated cells.

The protein localises to the cytoplasm. It is found in the cytoskeleton. It localises to the microtubule organizing center. Its subcellular location is the centrosome. The protein resides in the spindle. The protein localises to the spindle pole. It is found in the cell projection. It localises to the cilium. Its function is as follows. May play a role in cell-cycle-dependent microtubule organization. This chain is Centrosome and spindle pole associated protein 1 (Cspp1), found in Mus musculus (Mouse).